The chain runs to 291 residues: 4-hydroxy-tetrahydrodipicolinate synthase (291 aa).

Threonine 45 lines the pyruvate pocket. Tyrosine 133 acts as the Proton donor/acceptor in catalysis. Lysine 161 acts as the Schiff-base intermediate with substrate in catalysis. Isoleucine 203 lines the pyruvate pocket.

It belongs to the DapA family. As to quaternary structure, homotetramer; dimer of dimers.

It localises to the cytoplasm. It carries out the reaction L-aspartate 4-semialdehyde + pyruvate = (2S,4S)-4-hydroxy-2,3,4,5-tetrahydrodipicolinate + H2O + H(+). The protein operates within amino-acid biosynthesis; L-lysine biosynthesis via DAP pathway; (S)-tetrahydrodipicolinate from L-aspartate: step 3/4. Functionally, catalyzes the condensation of (S)-aspartate-beta-semialdehyde [(S)-ASA] and pyruvate to 4-hydroxy-tetrahydrodipicolinate (HTPA). This is 4-hydroxy-tetrahydrodipicolinate synthase from Saccharophagus degradans (strain 2-40 / ATCC 43961 / DSM 17024).